Here is a 701-residue protein sequence, read N- to C-terminus: Polyribonucleotide nucleotidyltransferase (701 aa).

Positions 485 and 491 each coordinate Mg(2+). The KH domain occupies 552-611; that stretch reads PKIFKTTVDPEKIRDIIGPGGKMINKIIAETNVKIDIEPDGRIFVAAPDDISGNRAISMI. Positions 621–689 constitute an S1 motif domain; the sequence is GQFFLGKVTR…KLGRLSLSRK (69 aa).

The protein belongs to the polyribonucleotide nucleotidyltransferase family. Mg(2+) serves as cofactor.

The protein localises to the cytoplasm. The catalysed reaction is RNA(n+1) + phosphate = RNA(n) + a ribonucleoside 5'-diphosphate. Involved in mRNA degradation. Catalyzes the phosphorolysis of single-stranded polyribonucleotides processively in the 3'- to 5'-direction. This Caldicellulosiruptor bescii (strain ATCC BAA-1888 / DSM 6725 / KCTC 15123 / Z-1320) (Anaerocellum thermophilum) protein is Polyribonucleotide nucleotidyltransferase.